The following is a 131-amino-acid chain: Profilin-2 (131 aa).

Cys13 and Cys115 are disulfide-bonded. The Involved in PIP2 interaction motif lies at 81-97 (AVIRGKKGPGGVTVKKT). Thr111 carries the post-translational modification Phosphothreonine.

The protein belongs to the profilin family. Multimer. Occurs in many kinds of cells as a complex with monomeric actin in a 1:1 ratio. In terms of processing, phosphorylated by MAP kinases.

The protein localises to the cytoplasm. It localises to the cytoskeleton. In terms of biological role, binds to actin and affects the structure of the cytoskeleton. At high concentrations, profilin prevents the polymerization of actin, whereas it enhances it at low concentrations. By binding to PIP2, it inhibits the formation of IP3 and DG. In Hevea brasiliensis (Para rubber tree), this protein is Profilin-2.